Reading from the N-terminus, the 481-residue chain is UDP-glycosyltransferase 72B3 (481 aa).

UDP-alpha-D-glucose is bound by residues serine 277, alanine 347 to glutamine 349, histidine 364 to glutamate 372, and tyrosine 386 to glutamine 389.

It belongs to the UDP-glycosyltransferase family.

Functionally, possesses low quercetin 3-O-glucosyltransferase activity in vitro. This chain is UDP-glycosyltransferase 72B3 (UGT72B3), found in Arabidopsis thaliana (Mouse-ear cress).